Here is a 393-residue protein sequence, read N- to C-terminus: MTMLATKKDPMIVSMGPQHPSMHGVLRLIVTSDGENVIDCEPILGYLHRGMEKIAENRTIIQYLPYVTRWDYLATMFTEAITVNAPEKLANIQIPKRASYIRIIMLELSRIASHLLWLGPFMADVGAQTPFFYIFREREMIYDLFEAATGMRMMHNYFRIGGVAVDFPYGWVDKCLDFCDYFLPKVDEYEQLITNNPIFLKRVEGVGFIGREEAINWGLSGPMLRASGVRWDLRKVDHYECYDELDWQIQWQKEGDSLARYLVRIGEMRESVRIIQQALKVIPGGPYENLEARRLNQQKDSEWNDFDYQFISKKSSPTFKLPKQEHYVRIEAPKGELGIFLIGDDNVSPWRWKIRPPGFINLQILPQLVKGMKLADIMTILGSIDIIMGEVDR.

This sequence belongs to the complex I 49 kDa subunit family. As to quaternary structure, NDH is composed of at least 16 different subunits, 5 of which are encoded in the nucleus.

The protein resides in the plastid. The protein localises to the chloroplast thylakoid membrane. The catalysed reaction is a plastoquinone + NADH + (n+1) H(+)(in) = a plastoquinol + NAD(+) + n H(+)(out). It carries out the reaction a plastoquinone + NADPH + (n+1) H(+)(in) = a plastoquinol + NADP(+) + n H(+)(out). In terms of biological role, NDH shuttles electrons from NAD(P)H:plastoquinone, via FMN and iron-sulfur (Fe-S) centers, to quinones in the photosynthetic chain and possibly in a chloroplast respiratory chain. The immediate electron acceptor for the enzyme in this species is believed to be plastoquinone. Couples the redox reaction to proton translocation, and thus conserves the redox energy in a proton gradient. The protein is NAD(P)H-quinone oxidoreductase subunit H, chloroplastic of Angiopteris evecta (Mule's foot fern).